A 160-amino-acid polypeptide reads, in one-letter code: Urease accessory protein UreE (160 aa).

The protein belongs to the UreE family.

It localises to the cytoplasm. In terms of biological role, involved in urease metallocenter assembly. Binds nickel. Probably functions as a nickel donor during metallocenter assembly. The polypeptide is Urease accessory protein UreE (Acinetobacter baumannii (strain AB307-0294)).